Here is a 773-residue protein sequence, read N- to C-terminus: Cytochrome c oxidase subunit 1+2 (773 aa).

A COX1 region spans residues 1-491; it reads MKLLEIYDKQ…LIASYGSLIT (491 aa). A helical membrane pass occupies residues 41 to 61; it reads TMYITFSIFAGIIGTLLSLVI. Glu64 is a binding site for Ca(2+). Position 85 (His85) interacts with Fe(II)-heme a. 6 helical membrane-spanning segments follow: residues 87 to 111, 130 to 150, 173 to 193, 211 to 231, 262 to 278, and 290 to 310; these read LIMIFFVVMYCSMPAMLGGFANWFL, LWLIVVSFGLLLTSSCVGIGA, VGILSLHIAGASSLVGAINFL, LFVWSVVITAVLLVLSLPVLA, LFHPEVYILILPGFGII, and IFGVKGMISAMSAIGFLGFLV. His264 is a binding site for Cu cation. Residues 264–268 constitute a cross-link (1'-histidyl-3'-tyrosine (His-Tyr)); the sequence is HPEVY. Position 268 (Tyr268) interacts with O2. Residues His314 and His315 each contribute to the Cu cation site. Helical transmembrane passes span 335–355 and 362–382; these read IIAIPTGIKIFSWLATLWGGV and MLFVIGFLVLFTIGGLTGVVL. Mg(2+) is bound by residues His392 and Asp393. The next 5 membrane-spanning stretches (helical) occupy residues 396–416, 444–464, 483–503, 555–575, and 604–624; these read YVVAHFHYVLSMGAIFAIFAG, FWTMFIGVNVTFFPMHFLGLA, IASYGSLITAFGLLFFFVNIF, IFFYLIVVAVFIGWVMGRILW, and GTVIEIVWTLIPTVILYLIAI. A heme a3-binding site is contributed by His400. His402 contacts Fe(II)-heme a. The segment at 492–773 is COX2; sequence AFGLLFFFVN…VQEYLGRLYK (282 aa). Residues His709, Cys744, Cys748, and His752 each coordinate Cu cation.

In the N-terminal section; belongs to the heme-copper respiratory oxidase family. It in the C-terminal section; belongs to the cytochrome c oxidase subunit 2 family. Component of the cytochrome c oxidase (complex IV, CIV), a multisubunit enzyme composed of a catalytic core of 3 subunits and several supernumerary subunits. The complex exists as a monomer or a dimer and forms supercomplexes (SCs) in the inner mitochondrial membrane with ubiquinol-cytochrome c oxidoreductase (cytochrome b-c1 complex, complex III, CIII). Heme serves as cofactor. The cofactor is Cu cation.

It localises to the mitochondrion inner membrane. The catalysed reaction is 4 Fe(II)-[cytochrome c] + O2 + 8 H(+)(in) = 4 Fe(III)-[cytochrome c] + 2 H2O + 4 H(+)(out). It functions in the pathway energy metabolism; oxidative phosphorylation. Functionally, component of the cytochrome c oxidase, the last enzyme in the mitochondrial electron transport chain which drives oxidative phosphorylation. The respiratory chain contains 3 multisubunit complexes succinate dehydrogenase (complex II, CII), ubiquinol-cytochrome c oxidoreductase (cytochrome b-c1 complex, complex III, CIII) and cytochrome c oxidase (complex IV, CIV), that cooperate to transfer electrons derived from NADH and succinate to molecular oxygen, creating an electrochemical gradient over the inner membrane that drives transmembrane transport and the ATP synthase. Cytochrome c oxidase is the component of the respiratory chain that catalyzes the reduction of oxygen to water. Electrons originating from reduced cytochrome c in the intermembrane space (IMS) are transferred via the dinuclear copper A center (CU(A)) of subunit 2 and heme A of subunit 1 to the active site in subunit 1, a binuclear center (BNC) formed by heme A3 and copper B (CU(B)). The BNC reduces molecular oxygen to 2 water molecules using 4 electrons from cytochrome c in the IMS and 4 protons from the mitochondrial matrix. The chain is Cytochrome c oxidase subunit 1+2 (cox1/2) from Dictyostelium citrinum (Slime mold).